The following is a 101-amino-acid chain: Small ribosomal subunit protein uS14 (101 aa).

It belongs to the universal ribosomal protein uS14 family. Part of the 30S ribosomal subunit. Contacts proteins S3 and S10.

In terms of biological role, binds 16S rRNA, required for the assembly of 30S particles and may also be responsible for determining the conformation of the 16S rRNA at the A site. This chain is Small ribosomal subunit protein uS14, found in Chlamydia caviae (strain ATCC VR-813 / DSM 19441 / 03DC25 / GPIC) (Chlamydophila caviae).